The chain runs to 405 residues: Imidazolonepropionase (405 aa).

The Fe(3+) site is built by histidine 73 and histidine 75. Residues histidine 73 and histidine 75 each coordinate Zn(2+). 4-imidazolone-5-propanoate-binding residues include arginine 82, tyrosine 145, and histidine 178. N-formimidoyl-L-glutamate is bound at residue tyrosine 145. Histidine 243 lines the Fe(3+) pocket. Histidine 243 provides a ligand contact to Zn(2+). Glutamine 246 lines the 4-imidazolone-5-propanoate pocket. Aspartate 318 provides a ligand contact to Fe(3+). Aspartate 318 lines the Zn(2+) pocket. 2 residues coordinate N-formimidoyl-L-glutamate: asparagine 320 and glycine 322. Threonine 323 is a binding site for 4-imidazolone-5-propanoate.

The protein belongs to the metallo-dependent hydrolases superfamily. HutI family. Zn(2+) is required as a cofactor. It depends on Fe(3+) as a cofactor.

It is found in the cytoplasm. The enzyme catalyses 4-imidazolone-5-propanoate + H2O = N-formimidoyl-L-glutamate. It participates in amino-acid degradation; L-histidine degradation into L-glutamate; N-formimidoyl-L-glutamate from L-histidine: step 3/3. Functionally, catalyzes the hydrolytic cleavage of the carbon-nitrogen bond in imidazolone-5-propanoate to yield N-formimidoyl-L-glutamate. It is the third step in the universal histidine degradation pathway. The protein is Imidazolonepropionase of Brucella suis biovar 1 (strain 1330).